We begin with the raw amino-acid sequence, 201 residues long: Large ribosomal subunit protein uL4 (201 aa).

The tract at residues 39–72 (RRGTASTKTRAQVSKSGKKMYSQKGTGNARHGDR) is disordered. Positions 42–53 (TASTKTRAQVSK) are enriched in polar residues.

It belongs to the universal ribosomal protein uL4 family. Part of the 50S ribosomal subunit.

Its function is as follows. One of the primary rRNA binding proteins, this protein initially binds near the 5'-end of the 23S rRNA. It is important during the early stages of 50S assembly. It makes multiple contacts with different domains of the 23S rRNA in the assembled 50S subunit and ribosome. In terms of biological role, forms part of the polypeptide exit tunnel. The protein is Large ribosomal subunit protein uL4 of Deinococcus deserti (strain DSM 17065 / CIP 109153 / LMG 22923 / VCD115).